A 424-amino-acid chain; its full sequence is GTPase Obg (424 aa).

An Obg domain is found at 1–158 (MFVDRAEVFV…RYISLELKIL (158 aa)). The tract at residues 21–42 (SFRREKYVPRGGPDGGDGGKGG) is disordered. Residues 32–42 (GPDGGDGGKGG) show a composition bias toward gly residues. One can recognise an OBG-type G domain in the interval 159–331 (ADVGLLGFPN…LMKEAAAMLT (173 aa)). GTP-binding positions include 165–172 (GFPNVGKS), 190–194 (FTTLS), 212–215 (DIPG), 282–285 (NKAD), and 312–314 (SAA). Mg(2+) contacts are provided by S172 and T192. One can recognise an OCT domain in the interval 345–424 (KFIPEEKRFT…LNDFEFDYIL (80 aa)).

The protein belongs to the TRAFAC class OBG-HflX-like GTPase superfamily. OBG GTPase family. Monomer. Mg(2+) serves as cofactor.

Its subcellular location is the cytoplasm. An essential GTPase which binds GTP, GDP and possibly (p)ppGpp with moderate affinity, with high nucleotide exchange rates and a fairly low GTP hydrolysis rate. Plays a role in control of the cell cycle, stress response, ribosome biogenesis and in those bacteria that undergo differentiation, in morphogenesis control. The protein is GTPase Obg of Clostridium kluyveri (strain NBRC 12016).